The following is a 186-amino-acid chain: Ribosome-recycling factor (186 aa).

It belongs to the RRF family.

It is found in the cytoplasm. Functionally, responsible for the release of ribosomes from messenger RNA at the termination of protein biosynthesis. May increase the efficiency of translation by recycling ribosomes from one round of translation to another. The sequence is that of Ribosome-recycling factor from Cupriavidus metallidurans (strain ATCC 43123 / DSM 2839 / NBRC 102507 / CH34) (Ralstonia metallidurans).